Here is a 3655-residue protein sequence, read N- to C-terminus: NuA4 acetyltransferase complex subunit Tra2 (3655 aa).

The tract at residues 8-2459 (SLSSSIELLK…REYHIRLLGK (2452 aa)) is HEAT. 26 HEAT repeats span residues 46–89 (QLYA…CAHR), 94–131 (QYAQ…TFKF), 149–188 (TNLP…IIQQ), 230–268 (PGVQ…FIEF), 300–338 (LSEK…ILST), 374–412 (STLA…SIGL), 438–475 (FLLL…ETKS), 606–643 (IFLK…STSS), 644–683 (KFLN…VTVS), 735–772 (SLYK…ELCL), 783–820 (PYMS…LTPD), 828–867 (PYIE…RNRK), 1100–1141 (AFIL…QDHS), 1147–1184 (DRQV…QLFR), 1193–1230 (EIAP…LSNT), 1429–1470 (RKLL…LFHL), 1665–1704 (NLVS…FLLK), 1709–1746 (GILL…NVYA), 1753–1790 (IGAL…SEDV), 1808–1846 (QFPY…YIFS), 1891–1934 (EHRG…WNDL), 1973–2011 (SEAI…TDAN), 2036–2073 (ENLS…LSNT), 2120–2157 (DALH…LQIV), 2183–2221 (DQRR…NSPV), and 2401–2438 (DFVL…DEIP). A head region spans residues 2460–3655 (TPNVLETILT…QMDQLWQAWL (1196 aa)). Residues 2484 to 3045 (LLVYLSKTYG…HFQLRTAYED (562 aa)) form the FAT domain. The tract at residues 3059–3105 (RGNSRLRENDSSSDNKSKDLSPSGSFSSVSQFNSKNGSPSSIDSSEK) is disordered. Residues 3063–3077 (RLRENDSSSDNKSKD) are compositionally biased toward basic and acidic residues. Low complexity predominate over residues 3078-3092 (LSPSGSFSSVSQFNS). In terms of domain architecture, PI3K/PI4K catalytic spans 3285–3625 (VPNVDLVRGH…VISHNVPEDL (341 aa)). Positions 3291–3297 (VRGHTMC) are G-loop. Positions 3491–3499 (NIGGRSPQK) are catalytic loop. The interval 3511 to 3536 (SQDLLPSMTSNQPVFHNTEAVPFRLT) is activation loop. Positions 3623–3655 (EDLPLNQTLVDLVSQATNPQQLAQMDQLWQAWL) constitute an FATC domain.

It belongs to the PI3/PI4-kinase family. TRA1 subfamily. As to quaternary structure, component of the NuA4 acetyltransferase complex. Tra1 is the scaffold subunit for binding to a variety of transcription activators or transcription factors to recruit NuA4 for targeted gene activation. Requires Hsp90 and its co-chaperone, the Triple-T complex (TTT), for its incorporation into NuA4. Interacts with tel2.

Its function is as follows. Component of the NuA4 histone H4/H2A acetyltransferase involved in transcription and DNA repair. This chain is NuA4 acetyltransferase complex subunit Tra2, found in Schizosaccharomyces pombe (strain 972 / ATCC 24843) (Fission yeast).